Here is a 118-residue protein sequence, read N- to C-terminus: V-type proton ATPase subunit G 1 (118 aa).

An N-acetylalanine modification is found at Ala2. Residues 55–90 (FQSKQQAAMGSQGNLSAEVEQATRRQVQGMQSSQQR) form a disordered region. 2 stretches are compositionally biased toward polar residues: residues 56 to 69 (QSKQ…QGNL) and 78 to 89 (RRQVQGMQSSQQ).

This sequence belongs to the V-ATPase G subunit family. V-ATPase is a heteromultimeric enzyme made up of two complexes: the ATP-hydrolytic V1 complex and the proton translocation V0 complex. The V1 complex consists of three catalytic AB heterodimers that form a heterohexamer, three peripheral stalks each consisting of EG heterodimers, one central rotor including subunits D and F, and the regulatory subunits C and H. The proton translocation complex V0 consists of the proton transport subunit a, a ring of proteolipid subunits c9c'', rotary subunit d, subunits e and f, and the accessory subunits ATP6AP1/Ac45 and ATP6AP2/PRR.

The protein resides in the apical cell membrane. Its function is as follows. Subunit of the V1 complex of vacuolar(H+)-ATPase (V-ATPase), a multisubunit enzyme composed of a peripheral complex (V1) that hydrolyzes ATP and a membrane integral complex (V0) that translocates protons. V-ATPase is responsible for acidifying and maintaining the pH of intracellular compartments and in some cell types, is targeted to the plasma membrane, where it is responsible for acidifying the extracellular environment. In aerobic conditions, involved in intracellular iron homeostasis, thus triggering the activity of Fe(2+) prolyl hydroxylase (PHD) enzymes, and leading to HIF1A hydroxylation and subsequent proteasomal degradation. In Canis lupus familiaris (Dog), this protein is V-type proton ATPase subunit G 1 (ATP6V1G1).